Consider the following 312-residue polypeptide: MSIVETCISFVSTNPFYPFCTGLLLNCVVTPLYFWKTQNGRIVVVSLLQFVVLYATAFISIGTDKSLYRNKWVALPLSKKTRISRNTSLYCFKLKYPFERLHIPMGYHLAVRVTINGERLVRYYTPVNVPNTEGHLELVVKTYKHGVVSKYFDKLKIRQYVEFKGPLGELEYDQDTATELGIIAGGSGITPVLQVLQEIIPSPEDLTHISLIYANETEDDILMKSQLDHMAKEYPHFKVHYVIHKPNGKWNGDVGYVTLEEMKRYLPKQAEDHRLLICGPPKMNEMVLNYAKELGWSNGFHKGNGTDKVFVF.

At 1 to 14 the chain is on the extracellular side; the sequence is MSIVETCISFVSTN. Residues 15 to 35 traverse the membrane as a helical segment; it reads PFYPFCTGLLLNCVVTPLYFW. The Cytoplasmic segment spans residues 36-41; the sequence is KTQNGR. Residues 42-62 form a helical membrane-spanning segment; sequence IVVVSLLQFVVLYATAFISIG. Residues 63-179 lie on the Extracellular side of the membrane; that stretch reads TDKSLYRNKW…LEYDQDTATE (117 aa). Residues 70 to 173 enclose the FAD-binding FR-type domain; sequence NKWVALPLSK…KGPLGELEYD (104 aa). The helical transmembrane segment at 180–200 threads the bilayer; the sequence is LGIIAGGSGITPVLQVLQEII. Topologically, residues 201-312 are cytoplasmic; sequence PSPEDLTHIS…GNGTDKVFVF (112 aa).

This sequence belongs to the flavoprotein pyridine nucleotide cytochrome reductase family. FAD is required as a cofactor.

It localises to the membrane. This is an uncharacterized protein from Saccharomyces cerevisiae (strain ATCC 204508 / S288c) (Baker's yeast).